Here is a 134-residue protein sequence, read N- to C-terminus: Large ribosomal subunit protein bL17 (134 aa).

This sequence belongs to the bacterial ribosomal protein bL17 family. As to quaternary structure, part of the 50S ribosomal subunit. Contacts protein L32.

The chain is Large ribosomal subunit protein bL17 from Paracidovorax citrulli (strain AAC00-1) (Acidovorax citrulli).